Reading from the N-terminus, the 707-residue chain is Ribosomal RNA large subunit methyltransferase K/L (707 aa).

The THUMP domain maps to valine 44 to leucine 155.

The protein belongs to the methyltransferase superfamily. RlmKL family.

The protein resides in the cytoplasm. It carries out the reaction guanosine(2445) in 23S rRNA + S-adenosyl-L-methionine = N(2)-methylguanosine(2445) in 23S rRNA + S-adenosyl-L-homocysteine + H(+). The catalysed reaction is guanosine(2069) in 23S rRNA + S-adenosyl-L-methionine = N(2)-methylguanosine(2069) in 23S rRNA + S-adenosyl-L-homocysteine + H(+). Functionally, specifically methylates the guanine in position 2445 (m2G2445) and the guanine in position 2069 (m7G2069) of 23S rRNA. This chain is Ribosomal RNA large subunit methyltransferase K/L, found in Legionella pneumophila (strain Corby).